Reading from the N-terminus, the 322-residue chain is Nodulation protein D 1 (322 aa).

An HTH lysR-type domain is found at Leu6–Thr63. The H-T-H motif DNA-binding region spans Leu23–Thr42.

It belongs to the LysR transcriptional regulatory family.

In terms of biological role, regulates the expression of the nod abcFE genes which encode other nodulation proteins. NodD is also a negative regulator of its own expression. Binds flavonoids as inducers. This Sinorhizobium fredii (strain NBRC 101917 / NGR234) protein is Nodulation protein D 1 (nodD1).